We begin with the raw amino-acid sequence, 141 residues long: Large ribosomal subunit protein uL11 (141 aa).

Belongs to the universal ribosomal protein uL11 family. In terms of assembly, part of the ribosomal stalk of the 50S ribosomal subunit. Interacts with L10 and the large rRNA to form the base of the stalk. L10 forms an elongated spine to which L12 dimers bind in a sequential fashion forming a multimeric L10(L12)X complex. In terms of processing, one or more lysine residues are methylated.

Functionally, forms part of the ribosomal stalk which helps the ribosome interact with GTP-bound translation factors. In Thermotoga petrophila (strain ATCC BAA-488 / DSM 13995 / JCM 10881 / RKU-1), this protein is Large ribosomal subunit protein uL11.